Reading from the N-terminus, the 2690-residue chain is Non-reducing polyketide synthase pigA (2690 aa).

Residues 96 to 211 enclose the Starter acyltransferase (SAT) domain; that stretch reads NILLSPLVVI…AELSRVLQDF (116 aa). The active-site Nucleophile; for transacylase activity is the cysteine 140. Histidine 258 acts as the Proton donor/acceptor; for transacylase activity in catalysis. The Ketosynthase family 3 (KS3) domain maps to 388–804; sequence ENDIAVIGMS…GSNASLIVTQ (417 aa). Active-site for beta-ketoacyl synthase activity residues include cysteine 553, histidine 688, and histidine 727. The Malonyl-CoA:ACP transacylase (MAT) domain occupies 915–1182; it reads FGGQISTFVG…VQRLAKQHPS (268 aa). Residues 1296-1426 form an N-terminal hotdog fold region; that stretch reads LTFVGYQDKD…GKVFFRSVDD (131 aa). Residues 1296-1602 form the PKS/mFAS DH domain; the sequence is LTFVGYQDKD…YAKVPKMSMS (307 aa). The segment at 1323 to 1600 is product template (PT) domain; the sequence is LVSGHLIAQT…INYAKVPKMS (278 aa). Catalysis depends on histidine 1327, which acts as the Proton acceptor; for dehydratase activity. The C-terminal hotdog fold stretch occupies residues 1454–1602; it reads ADDIIQGRNI…YAKVPKMSMS (149 aa). Catalysis depends on aspartate 1510, which acts as the Proton donor; for dehydratase activity. The region spanning 1657 to 1731 is the Carrier 1 domain; it reads PDISGKVRAM…GLLRCIQEAL (75 aa). The residue at position 1691 (serine 1691) is an O-(pantetheine 4'-phosphoryl)serine. Residues 1731–1764 form a disordered region; the sequence is LGPSEGVEEETDNEEGEDGESSENPSVFTPSDAA. A compositionally biased stretch (acidic residues) spans 1736–1751; that stretch reads GVEEETDNEEGEDGES. Residues 1755–1764 show a composition bias toward polar residues; that stretch reads PSVFTPSDAA. The 75-residue stretch at 1768–1842 folds into the Carrier 2 domain; it reads SSAKADVAEF…EFDVKVNGKS (75 aa). Serine 1802 carries the post-translational modification O-(pantetheine 4'-phosphoryl)serine. The tract at residues 1948–2255 is methyltransferase domain; the sequence is QTLERIKYLP…EVNIQRIFLA (308 aa). The Thioester reductase (TE) domain maps to 2320 to 2564; that stretch reads VTGATGSLGS…LSWTPVNDVA (245 aa).

The cofactor is pantetheine 4'-phosphate.

It participates in secondary metabolite biosynthesis. In terms of biological role, non-reducing polyketide synthase; part of the gene cluster that mediates the biosynthesis of azaphilone pigments (MonAzPs), a complex mixture of compounds with a common azaphilone skeleton very widely used as food colorants. PigA catalyzes the first step of MonAzPs biosynthesis and forms the hexaketide precursor from successive condensations of five malonyl-CoA units, with a simple acetyl-CoA starter unit. The starter acyl transferase (SAT) domain of pigA selects an acetyl-CoA starter unit, and the ketoacyl synthase (KS)-acyl transferase (AT)-acyl carrier protein (ACP) domains extend this starter unit five times with malonyl-CoA in five successive decarboxylative Claisen condensation cycles. The methyltransferase (MT) domain conducts a single C-methylation at C-4, most likely at the pentaketide stage. The reactive hexaketide chain then undergoes a product template (PT) domain-mediated C-2 to C-7 aldol cyclization to afford the first aromatic ring, followed by reductive release of the first pathway intermediate by the NADPH-dependent reductive release (R) domain. The role of esterase pigG is not clear, but it may play at most a supplementary role in the formation of the benzaldehyde produced by the pigA nrPKS. This very reactive benzaldehyde is intercepted by the pigC ketoreductase that to provide the first stable enzyme-free MonAzPs intermediate, 6-(4-hydroxy-2-oxopentyl)-3-methyl-2,4-dioxocyclohexane carbaldehyde, also known as M7PKS-1. The FAD-dependent monooxygenase pigN hydroxylates M7PKS-1 at C-4, which triggers the formation of the pyran ring. PigJ, pigK and pigD are involved in the acetylation of the pyran ring. PigJ and pigK form the two subunits of a dedicated fungal FAS that produces the side chain fatty acyl moiety of MonAzPs and pigD transfers the fatty acyl chain to the C-4 alcohol. PigM and pigO are involved in the elimination of the omega-1 alcohol. PigM acts as an O-acetyltransferase that synthesizes the putative O-11 acetyl intermediate whereas pigO eliminates acetic acid to yield an intermediate with a C10(11) double bond. The dehydration of the C-11 alcohol followed by the reduction of the C6(7) double bond by the NAD(P)H-dependent oxidoreductase pigE increases the electrophilicity of the C-5 ketone of the resulting acyl benzopyran. This in turn sets up the C-5 ketone for an intramolecular Knoevenagel aldol condensation with the C-20 enol of the side chain. This condensation affords the characteristic linear tricyclic carbon skeletons of the yellow pigments that serve as the common precursors for the classical yellow pigments monascin and ankaflavin, orange pigments rubopunctatin and monascorubrin, and red pigments ribropunctamine and monascorubramine. The FAD-dependent oxidoreductase pigF is especially invoved in the biosynthesis of orange and red pigments via desaturation of C6(7). The chain is Non-reducing polyketide synthase pigA from Monascus ruber (Mold).